Reading from the N-terminus, the 326-residue chain is Beta-ketoacyl-[acyl-carrier-protein] synthase III (326 aa).

Active-site residues include cysteine 111 and histidine 252. Positions 253 to 257 (QANIR) are ACP-binding. The active site involves asparagine 282.

Belongs to the thiolase-like superfamily. FabH family. In terms of assembly, homodimer.

It localises to the plastid. It is found in the chloroplast. The catalysed reaction is malonyl-[ACP] + acetyl-CoA + H(+) = 3-oxobutanoyl-[ACP] + CO2 + CoA. It functions in the pathway lipid metabolism; fatty acid biosynthesis. Its function is as follows. Catalyzes the condensation reaction of fatty acid synthesis by the addition to an acyl acceptor of two carbons from malonyl-ACP. Catalyzes the first condensation reaction which initiates fatty acid synthesis and may therefore play a role in governing the total rate of fatty acid production. Possesses both acetoacetyl-ACP synthase and acetyl transacylase activities. Its substrate specificity determines the biosynthesis of branched-chain and/or straight-chain of fatty acids. This chain is Beta-ketoacyl-[acyl-carrier-protein] synthase III, found in Porphyra purpurea (Red seaweed).